The following is a 392-amino-acid chain: Formate-dependent phosphoribosylglycinamide formyltransferase (392 aa).

Residues 20–21 (EL) and glutamate 80 each bind N(1)-(5-phospho-beta-D-ribosyl)glycinamide. ATP-binding positions include arginine 112, lysine 153, 158-163 (SSGKGQ), 193-196 (EGFV), and glutamate 201. The ATP-grasp domain occupies 117-306 (RLAAEELGLP…EFALHVRAIL (190 aa)). Residues glutamate 265 and glutamate 277 each contribute to the Mg(2+) site. Residues aspartate 284, lysine 355, and 362-363 (RR) contribute to the N(1)-(5-phospho-beta-D-ribosyl)glycinamide site.

Belongs to the PurK/PurT family. As to quaternary structure, homodimer.

The enzyme catalyses N(1)-(5-phospho-beta-D-ribosyl)glycinamide + formate + ATP = N(2)-formyl-N(1)-(5-phospho-beta-D-ribosyl)glycinamide + ADP + phosphate + H(+). It participates in purine metabolism; IMP biosynthesis via de novo pathway; N(2)-formyl-N(1)-(5-phospho-D-ribosyl)glycinamide from N(1)-(5-phospho-D-ribosyl)glycinamide (formate route): step 1/1. Its function is as follows. Involved in the de novo purine biosynthesis. Catalyzes the transfer of formate to 5-phospho-ribosyl-glycinamide (GAR), producing 5-phospho-ribosyl-N-formylglycinamide (FGAR). Formate is provided by PurU via hydrolysis of 10-formyl-tetrahydrofolate. This is Formate-dependent phosphoribosylglycinamide formyltransferase from Aeromonas salmonicida (strain A449).